Consider the following 572-residue polypeptide: Dityrosine transporter 1 (572 aa).

Disordered stretches follow at residues 1–28 and 49–95; these read MGSE…STFH and RANI…SPDT. Residues 1–110 are Cytoplasmic-facing; that stretch reads MGSEPFQKKN…YTYFSKDQRL (110 aa). Residues 13–28 are compositionally biased toward polar residues; it reads LQINSQESGTTRSTFH. Basic and acidic residues predominate over residues 50 to 62; it reads ANIDHDVFHEHPD. The span at 83–95 shows a compositional bias: polar residues; the sequence is SSNSQSRDPSPDT. The chain crosses the membrane as a helical span at residues 111-131; it reads IIFGIIIFIGFLGPMSGNIYI. Residues 132 to 149 are Extracellular-facing; sequence PALPLLQREYDVSATTIN. The helical transmembrane segment at 150 to 170 threads the bilayer; sequence ATVSVFMAVFSVGPLFWGALA. Residues 171 to 184 lie on the Cytoplasmic side of the membrane; that stretch reads DFGGRKFLYMVSLS. The helical transmembrane segment at 185-205 threads the bilayer; that stretch reads LMLIVNILLAAVPVNIAALFV. Residues 206–207 lie on the Extracellular side of the membrane; it reads LR. The helical transmembrane segment at 208-228 threads the bilayer; sequence IFQAFASSSVISLGAGTVTDV. The Cytoplasmic segment spans residues 229–240; that stretch reads VPPKHRGKAIAY. Residues 241-261 form a helical membrane-spanning segment; that stretch reads FMMGPNMGPIIAPIVAGLILM. Topologically, residues 262 to 267 are extracellular; the sequence is KGNYWR. The helical transmembrane segment at 268–288 threads the bilayer; sequence WLFGFTSIMTGIALILVTALL. The Cytoplasmic portion of the chain corresponds to 289–366; sequence PETLRCIVGN…TLYWKMIKCP (78 aa). A helical transmembrane segment spans residues 367–387; that stretch reads PIIITSVSTALLFSSYYAFSV. Topologically, residues 388-398 are extracellular; it reads TFSYYLEHDYR. A helical transmembrane segment spans residues 399–419; that stretch reads FTMLEIGAAYVCPGVAMLLGS. Residues 420-446 are Cytoplasmic-facing; that stretch reads QSGGHLSDYLRSRWIKSHPKKKFPAEF. A helical membrane pass occupies residues 447–469; sequence RLLLNLIGILLTICGTIGYGWAI. Topologically, residues 470 to 472 are extracellular; the sequence is FFH. The helical transmembrane segment at 473-493 threads the bilayer; the sequence is YHFVVLLVFSALTAFGMTWCS. The Cytoplasmic segment spans residues 494 to 520; sequence NTSMTYLTELFPKRAAGTVAVSSFFRN. A helical membrane pass occupies residues 521-541; sequence VGAAISSAIILQLCNAMGIGW. Cysteine 542 is a topological domain (extracellular). A helical membrane pass occupies residues 543-563; it reads FTGLGLCSSISLIGILYLLIF. Positions 548–572 are required for the localization to the prospore membrane; that stretch reads LCSSISLIGILYLLIFQRKYTAKEF. Residues 564–572 are Cytoplasmic-facing; the sequence is QRKYTAKEF.

This sequence belongs to the major facilitator superfamily. CAR1 family. In terms of processing, phosphorylated.

It localises to the prospore membrane. Its function is as follows. Prospore-specific dityrosine transporter responsible for translocation of dityrosine through the prospore membrane and required for the formation of the outermost layer of the spore. The sequence is that of Dityrosine transporter 1 (DTR1) from Saccharomyces cerevisiae (strain ATCC 204508 / S288c) (Baker's yeast).